The chain runs to 439 residues: Probable glycine dehydrogenase (decarboxylating) subunit 1 (439 aa).

Belongs to the GcvP family. N-terminal subunit subfamily. As to quaternary structure, the glycine cleavage system is composed of four proteins: P, T, L and H. In this organism, the P 'protein' is a heterodimer of two subunits.

It carries out the reaction N(6)-[(R)-lipoyl]-L-lysyl-[glycine-cleavage complex H protein] + glycine + H(+) = N(6)-[(R)-S(8)-aminomethyldihydrolipoyl]-L-lysyl-[glycine-cleavage complex H protein] + CO2. In terms of biological role, the glycine cleavage system catalyzes the degradation of glycine. The P protein binds the alpha-amino group of glycine through its pyridoxal phosphate cofactor; CO(2) is released and the remaining methylamine moiety is then transferred to the lipoamide cofactor of the H protein. This chain is Probable glycine dehydrogenase (decarboxylating) subunit 1, found in Aquifex aeolicus (strain VF5).